A 444-amino-acid polypeptide reads, in one-letter code: Tol-Pal system protein TolB (444 aa).

An N-terminal signal peptide occupies residues 1 to 19 (MRNIIYFILSLLFSFASYA).

It belongs to the TolB family. In terms of assembly, the Tol-Pal system is composed of five core proteins: the inner membrane proteins TolA, TolQ and TolR, the periplasmic protein TolB and the outer membrane protein Pal. They form a network linking the inner and outer membranes and the peptidoglycan layer.

The protein localises to the periplasm. Part of the Tol-Pal system, which plays a role in outer membrane invagination during cell division and is important for maintaining outer membrane integrity. This Rickettsia massiliae (strain Mtu5) protein is Tol-Pal system protein TolB.